We begin with the raw amino-acid sequence, 535 residues long: MTPVREIGTWDVLFFLVFLWLLSKLVGRLGRRGRTTPLRGPANKSLFFGLTRYLNESDDPGAIYESWAAEYGPAFRVPSVLGSHRIMICDAKAIAHFYSKETFGYVQTPMTRISIKNIVGRGLLWSEGESHKRQRKALSPAFSNAAIRRLTSVFFDSSYKMKAAWDSILETNPDNSVIDVQKWMNHISLDSIGIAGFSHDFGSLDGKHSDVAAVFDSFGSTKPSYFAIVVFLLAQIFPILLNLPTNRILLINKLKKTMGDIADELLERTRKEKEGETGAVEEKSIIGLLIKAESAEAELRMSQDEVLAQMNVLILAGYETTSISLTWALIELSKRPEKQAKLREELLSQFTSTDPTWEQLTNGLPYLDSVVHEVLRLHPPIGELFRMAAEDDMMPLSTPLVTLSGQTVSSIAIGKGTVVGVPIRCMNRSEVLWGKDAKEFRPERWLEPGFGENNEVQGHRHLLTFVDGPRMCLGKGFALTEFKAALSVLIRNYTFEFPGPGGAVPKIEKHRSILPRPKVEGQDGAKVPLRVRRVE.

Helical transmembrane passes span 7–27 and 225–245; these read IGTW…KLVG and YFAI…NLPT. Residue Cys472 coordinates heme.

Belongs to the cytochrome P450 family. Heme serves as cofactor.

It localises to the membrane. It participates in secondary metabolite biosynthesis; terpenoid biosynthesis. Cytochrome P450 monooxygenase; part of the gene cluster that mediates the biosynthesis of clavilactone A, a meroterpenoid that features a unique benzo-fused ten-membered carbocyclic ring unit with an alpha,beta-epoxy-gamma-lactone moiety, forming an intriguing 10/5/3 tricyclic nested skeleton. Cytochrome P450 monooxygenases claO, claP, claQ, claU, and claW are close orthologs, suggesting that a redundant function or pseudogenes are present in the cla cluster. These monoxygenases are not involved in clavilactone A biosynthesis nor its modification. ClaR, ClaS and ClaT are sufficient to produce clavilactone A. The biosynthesis begins with the prenyltransferase claS that transfers geranyl pyrophosphate (GPP) to hydroquinone to produces geranylhydroquinone. The cytochrome P450 monooxygenase claR then catalyzes the diradical coupling reaction between the intramolecular hydroquinone and allyl moieties to form the benzo-fused ten-membered carbocyclic ring unit of wigantol. Finally the cytochrome P450 monooxygenase claT exquisitely and stereoselectively assembles the alpha,beta-epoxy-gamma-lactone moiety, producing clavilactone A via arnebinol A. This chain is Cytochrome P450 monooxygenase claQ, found in Ampulloclitocybe clavipes (Club foot).